The sequence spans 4545 residues: Prolow-density lipoprotein receptor-related protein 1 (4545 aa).

An N-terminal signal peptide occupies residues 1-19 (MLTPPLLLLLPLLSALVAG). The Extracellular portion of the chain corresponds to 20–4424 (ATMDAPKTCS…SQQQPGHMTS (4405 aa)). 2 LDL-receptor class A domains span residues 27–66 (TCSPKQFACRDQITCISKGWRCDGERDCPDGSDEAPEICP) and 72–110 (RCPPNEHSCLGTELCVPMSRLCNGIQDCMDGSDEGAHCR). 6 cysteine pairs are disulfide-bonded: cysteine 28-cysteine 41, cysteine 35-cysteine 54, cysteine 48-cysteine 65, cysteine 73-cysteine 86, cysteine 80-cysteine 99, and cysteine 93-cysteine 109. Residues asparagine 115, asparagine 137, asparagine 186, asparagine 240, and asparagine 275 are each glycosylated (N-linked (GlcNAc...) asparagine). LDL-receptor class B repeat units lie at residues 293–335 (GNFY…DPAM), 336–379 (GKVF…DLVS), and 380–423 (RLVY…FENY). N-linked (GlcNAc...) asparagine glycosylation occurs at asparagine 358. Residue asparagine 447 is glycosylated (N-linked (GlcNAc...) asparagine). LDL-receptor class B repeat units follow at residues 572–614 (GFIY…DWMG), 615–660 (DNLY…DPLN), 661–711 (GWMY…DIPA), and 712–755 (GRLY…HGNY). The HAT 1 repeat unit spans residues 639 to 671 (TRKTLIEGKMTHPRAIVVDPLNGWMYWTDWEED). The N-linked (GlcNAc...) asparagine glycan is linked to asparagine 730. LDL-receptor class A domains follow at residues 854–892 (QCQPGEFACANNRCIQERWKCDGDNDCLDNSDEAPALCH), 895–933 (TCPSDRFKCENNRCIPNRWLCDGDNDCGNSEDESNATCS), 936–973 (TCPPNQFSCASGRCIPISWTCDLDDDCGDRSDESASCA), 976–1013 (TCFPLTQFTCNNGRCININWRCDNDNDCGDNSDEAGCS), 1015–1053 (SCSSTQFKCNSGRCIPEHWTCDGDNDCGDYSDETHANCT), 1062–1099 (GCHSDEFQCRLDGLCIPLRWRCDGDTDCMDSSDEKGCE), 1104–1142 (VCDPNVKFGCKDSARCISKAWVCDGDSDCEDNSDEENCE), and 1145–1184 (ACRPPSHPCANNTSVCLSPDKLCDGKDDCGDGSDEGELCD). 24 disulfide bridges follow: cysteine 855-cysteine 867, cysteine 862-cysteine 880, cysteine 874-cysteine 891, cysteine 896-cysteine 908, cysteine 903-cysteine 921, cysteine 915-cysteine 932, cysteine 937-cysteine 949, cysteine 944-cysteine 962, cysteine 956-cysteine 972, cysteine 977-cysteine 990, cysteine 985-cysteine 1003, cysteine 997-cysteine 1012, cysteine 1016-cysteine 1028, cysteine 1023-cysteine 1041, cysteine 1035-cysteine 1052, cysteine 1063-cysteine 1076, cysteine 1070-cysteine 1089, cysteine 1083-cysteine 1098, cysteine 1105-cysteine 1119, cysteine 1113-cysteine 1132, cysteine 1126-cysteine 1141, cysteine 1146-cysteine 1160, cysteine 1153-cysteine 1173, and cysteine 1167-cysteine 1183. Ca(2+)-binding residues include tryptophan 872, aspartate 875, aspartate 877, aspartate 879, aspartate 885, and glutamate 886. An N-linked (GlcNAc...) asparagine glycan is attached at asparagine 929. Ca(2+) is bound by residues tryptophan 1033, aspartate 1036, aspartate 1038, aspartate 1040, aspartate 1046, and glutamate 1047. Asparagine 1051 is a glycosylation site (N-linked (GlcNAc...) asparagine). Residues tryptophan 1081, aspartate 1084, aspartate 1086, aspartate 1088, aspartate 1094, and glutamate 1095 each contribute to the Ca(2+) site. N-linked (GlcNAc...) asparagine glycosylation is present at asparagine 1156. N-linked (GlcNAc...) asparagine glycosylation is found at asparagine 1196 and asparagine 1219. 5 LDL-receptor class B repeats span residues 1310–1356 (SALY…DWIA), 1357–1399 (GNIY…DPRD), 1400–1446 (GILF…DYLE), 1447–1491 (KRIL…YGGE), and 1492–1532 (VYWT…YHPS). 2 HAT repeats span residues 1380 to 1413 (TTLLAGDIEHPRAIALDPRDGILFWTDWDASLPR) and 1470 to 1503 (MEVLRGHEFLSHPFAVTLYGGEVYWTDWRTNTLA). N-linked (GlcNAc...) asparagine glycans are attached at residues asparagine 1512, asparagine 1559, asparagine 1576, asparagine 1617, and asparagine 1646. LDL-receptor class B repeat units lie at residues 1628 to 1670 (QRVY…DWVS), 1671 to 1714 (RNLF…HPLR), 1715 to 1754 (GKLYWTDGDNISMVNMDGSNRTLLFSGQKGPVGLAIDFPE), and 1755 to 1799 (SKLY…MGDK). One copy of the HAT 4 repeat lies at 1653–1684 (VVSADLPNAHGLAVDWVSRNLFWTSYDTNKKQ). 5 N-linked (GlcNAc...) asparagine glycosylation sites follow: asparagine 1724, asparagine 1734, asparagine 1764, asparagine 1826, and asparagine 1934. LDL-receptor class B repeat units follow at residues 1935–1977 (DTIY…DWIA), 1978–2020 (GNIY…HPEK), 2021–2064 (GYLF…DYQG), and 2065–2108 (GKLY…FEDF). Asparagine 1996 carries N-linked (GlcNAc...) asparagine glycosylation. Lysine 2010 is subject to N6-acetyllysine. N-linked (GlcNAc...) asparagine glycosylation occurs at asparagine 2049. N-linked (GlcNAc...) asparagine glycosylation is found at asparagine 2118 and asparagine 2128. LDL-receptor class B repeat units follow at residues 2254 to 2295 (NRIF…HRGW), 2296 to 2344 (DTLY…DECQ), 2345 to 2389 (NLMF…DHRA), 2390 to 2432 (EKLY…YGEH), and 2433 to 2474 (IFWT…VAND). HAT repeat units follow at residues 2277–2309 (TTIVENVGSVEGLAYHRGWDTLYWTSYTTSTIT), 2325–2358 (TVITMSGDDHPRAFVLDECQNLMFWTNWNELHPS), and 2411–2444 (HRYVILKSEPVHPFGLAVYGEHIFWTDWVRRAVQ). Asparagine 2473, asparagine 2503, and asparagine 2522 each carry an N-linked (GlcNAc...) asparagine glycan. 7 consecutive LDL-receptor class A domains span residues 2524 to 2563 (SCRAQDEFECANGECISFSLTCDGVSHCKDKSDEKPSYCN), 2566 to 2602 (RCKKTFRQCNNGRCVSNMLWCNGVDDCGDGSDEIPCN), 2605 to 2641 (ACGVGEFRCRDGSCIGNSSRCNQFVDCEDASDEMNCS), 2639 to 2690 (NCSA…RDCP), 2696 to 2732 (RCPLNYFACPSGRCIPMSWTCDKEDDCENGEDETHCN), 2734 to 2771 (FCSEAQFECQNHRCISKQWLCDGSDDCGDGSDEAAHCE), and 2774 to 2814 (TCGP…AGCL). Disulfide bonds link cysteine 2525/cysteine 2538, cysteine 2533/cysteine 2551, cysteine 2545/cysteine 2562, cysteine 2567/cysteine 2579, cysteine 2574/cysteine 2592, and cysteine 2586/cysteine 2601. Asparagine 2602 carries N-linked (GlcNAc...) asparagine glycosylation. 15 disulfide bridges follow: cysteine 2606/cysteine 2618, cysteine 2613/cysteine 2631, cysteine 2625/cysteine 2640, cysteine 2640/cysteine 2667, cysteine 2645/cysteine 2680, cysteine 2674/cysteine 2689, cysteine 2697/cysteine 2709, cysteine 2704/cysteine 2722, cysteine 2716/cysteine 2731, cysteine 2735/cysteine 2747, cysteine 2742/cysteine 2760, cysteine 2754/cysteine 2770, cysteine 2775/cysteine 2788, cysteine 2782/cysteine 2801, and cysteine 2795/cysteine 2813. N-linked (GlcNAc...) asparagine glycans are attached at residues asparagine 2621 and asparagine 2639. An N-linked (GlcNAc...) asparagine glycan is attached at asparagine 2816. LDL-receptor class A domains follow at residues 2818–2855 (TCDDREFMCQNRLCIPKHFVCDHDRDCADGSDESPECE), 2858–2899 (TCGP…PHCT), and 2904–2941 (KCNASSQFLCSSGRCVAEALLCNGQDDCGDGSDERGCH). Cystine bridges form between cysteine 2819–cysteine 2831, cysteine 2826–cysteine 2844, cysteine 2838–cysteine 2854, cysteine 2859–cysteine 2871, cysteine 2866–cysteine 2885, cysteine 2879–cysteine 2898, cysteine 2905–cysteine 2918, cysteine 2913–cysteine 2931, cysteine 2925–cysteine 2940, cysteine 2987–cysteine 2997, and cysteine 2993–cysteine 3006. N-linked (GlcNAc...) asparagine glycosylation is present at asparagine 2906. The EGF-like 1; calcium-binding domain occupies 2983-3018 (DVDECSTTFPCSQLCINTHGSYKCLCVEGYAPRGGD). 2 N-linked (GlcNAc...) asparagine glycosylation sites follow: asparagine 3049 and asparagine 3090. 5 LDL-receptor class B repeats span residues 3070 to 3114 (QMIY…DWVG), 3115 to 3157 (GNLY…DVQN), 3158 to 3201 (GYLY…DYVT), 3202 to 3244 (ERIY…FEDY), and 3245 to 3285 (VYWT…FHAL). HAT repeat units lie at residues 3128–3171 (EVSK…HSLI) and 3224–3256 (RHVVLSQDIPHIFALTLFEDYVYWTDWETKSIN). 2 N-linked (GlcNAc...) asparagine glycosylation sites follow: asparagine 3265 and asparagine 3334. LDL-receptor class A domains lie at 3334-3371 (NCTASQFVCKNDKCIPFWWKCDTEDDCGDHSDEPPDCP), 3374-3410 (KCRPGQFQCSTGICTNPAFICDGDNDCQDNSDEANCD), 3413-3450 (VCLPSQFKCTNTNRCIPGIFRCNGQDNCGDGEDERDCP), 3453-3491 (TCAPNQFQCSITKRCIPRVWVCDRDNDCVDGSDEPANCT), 3494-3533 (TCGVDEFRCKDSGRCIPARWKCDGEDDCGDGSDEPKEECD), 3536-3572 (TCEPYQFRCKNNRCVPGRWQCDYDNDCGDNSDEESCT), 3575-3611 (PCSESEFSCANGRCIAGRWKCDGDHDCADGSDEKDCT), 3613-3649 (RCDMDQFQCKSGHCIPLRWRCDADADCMDGSDEEACG), 3654-3692 (TCPLDEFQCNNTLCKPLAWKCDGEDDCGDNSDENPEECT), 3695-3733 (QCPPNRPFRCKNDRVCLWIGRQCDGTDNCGDGTDEEDCE), and 3741-3778 (HCKDKKEFLCRNQRCLSSSLRCNMFDDCGDGSDEEDCS). 33 disulfides stabilise this stretch: cysteine 3335–cysteine 3347, cysteine 3342–cysteine 3360, cysteine 3354–cysteine 3370, cysteine 3375–cysteine 3387, cysteine 3382–cysteine 3400, cysteine 3394–cysteine 3409, cysteine 3414–cysteine 3427, cysteine 3421–cysteine 3440, cysteine 3434–cysteine 3449, cysteine 3454–cysteine 3467, cysteine 3461–cysteine 3480, cysteine 3474–cysteine 3490, cysteine 3495–cysteine 3508, cysteine 3502–cysteine 3521, cysteine 3515–cysteine 3532, cysteine 3537–cysteine 3549, cysteine 3544–cysteine 3562, cysteine 3556–cysteine 3571, cysteine 3576–cysteine 3588, cysteine 3583–cysteine 3601, cysteine 3595–cysteine 3610, cysteine 3614–cysteine 3626, cysteine 3621–cysteine 3639, cysteine 3633–cysteine 3648, cysteine 3655–cysteine 3667, cysteine 3662–cysteine 3680, cysteine 3674–cysteine 3691, cysteine 3696–cysteine 3710, cysteine 3704–cysteine 3723, cysteine 3717–cysteine 3732, cysteine 3742–cysteine 3755, cysteine 3750–cysteine 3768, and cysteine 3762–cysteine 3777. An N-linked (GlcNAc...) asparagine glycan is attached at asparagine 3489. N-linked (GlcNAc...) asparagine glycosylation is present at asparagine 3663. 2 N-linked (GlcNAc...) asparagine glycosylation sites follow: asparagine 3789 and asparagine 3840. Residues 3913-3925 (GRVYWTNWHTGTI) form an LDL-receptor class B 31 repeat. The N-linked (GlcNAc...) asparagine glycan is linked to asparagine 3954. LDL-receptor class B repeat units lie at residues 3971–4013 (GNVY…DPLR), 4014–4057 (GTMY…DYHN), and 4058–4102 (ERLY…FEDY). The HAT 10 repeat unit spans residues 3995-4027 (TLISGMIDEPHAIVVDPLRGTMYWSDWGNHPKI). 3 N-linked (GlcNAc...) asparagine glycosylation sites follow: asparagine 4076, asparagine 4126, and asparagine 4180. 4 consecutive EGF-like domains span residues 4197–4230 (RPGTCTLQCFNGGSCFLNARRQPKCRCQPRYTGD), 4233–4269 (ELDQCWEYCHNGGTCAASPSGMPTCRCPTGFTGPRCT), 4270–4302 (QQVCAGYCANNSTCTVNQGNQPQCRCLPGFLGD), and 4305–4341 (QYRQCSGFCENFGTCQMAADGSRQCRCTVYFEGTRCE). 10 cysteine pairs are disulfide-bonded: cysteine 4201–cysteine 4211, cysteine 4205–cysteine 4221, cysteine 4237–cysteine 4247, cysteine 4241–cysteine 4257, cysteine 4259–cysteine 4268, cysteine 4273–cysteine 4283, cysteine 4277–cysteine 4293, cysteine 4309–cysteine 4319, cysteine 4313–cysteine 4329, and cysteine 4331–cysteine 4340. N-linked (GlcNAc...) asparagine glycosylation occurs at asparagine 4280. Residue asparagine 4365 is glycosylated (N-linked (GlcNAc...) asparagine). Residues 4376 to 4410 (LTCIDHCSNGGSCTMNSKMMPECQCPPHMTGPRCE) enclose the EGF-like 6 domain. 3 disulfide bridges follow: cysteine 4378–cysteine 4388, cysteine 4382–cysteine 4398, and cysteine 4400–cysteine 4409. Residues 4425 to 4445 (ILIPLLLLLLLLLVAGVVFWY) traverse the membrane as a helical segment. Residues 4446–4545 (KRRVRGAKGF…PEDEIGDPLA (100 aa)) are Cytoplasmic-facing. The interval 4446–4545 (KRRVRGAKGF…PEDEIGDPLA (100 aa)) is interaction with MAFB. The residue at position 4461 (threonine 4461) is a Phosphothreonine. Residue tyrosine 4508 is modified to Phosphotyrosine. Phosphoserine is present on residues serine 4518, serine 4521, and serine 4524.

The protein belongs to the LDLR family. In terms of assembly, heterodimer of an 85-kDa membrane-bound carboxyl subunit and a non-covalently attached 515-kDa N-terminal subunit. Intracellular domain interacts with MAFB. Found in a complex with PID1/PCLI1, LRP1 and CUBNI. Interacts with SNX17, PID1/PCLI1, PDGF and CUBN. The intracellular domain interacts with SHC1, GULP1 and DAB1. Can weakly interact (via NPXY motif) with DAB2 (via PID domain); the interaction is enhanced by tyrosine phosphorylation of the NPXY motif. Interacts with MDK; promotes neuronal survival. Interacts with LRPAP1; this interaction is followed by rapid internalization. Interacts with uPA/PLAU and PAI1/SERPINE1, either individually or in complex with each other, leading to rapid endocytosis; this interaction is abolished in the presence of LRPAP1/RAP. Also interacts with tPA/PLAT alone or in complex with SERPINE1. Interacts with the urokinase receptor PLAUR; this interaction leads to PLAUR internalization and is impaired in the presence of SORL1. Interacts with PDGFB. Interacts with TAU/MAPT, leading to endocytosis; this interaction is reduced in the presence of LRPAP1/RAP. Interacts with IGFBP3. Interacts with ADGRG6. In terms of processing, cleaved into a 85 kDa membrane-spanning subunit (LRP-85) and a 515 kDa large extracellular domain (LRP-515) that remains non-covalently associated. Gamma-secretase-dependent cleavage of LRP-85 releases the intracellular domain from the membrane. Post-translationally, phosphorylated on serine and threonine residues. Phosphorylated on tyrosine residues upon stimulation with PDGF. Tyrosine phosphorylation promotes interaction with SHC1.

The protein localises to the cell membrane. Its subcellular location is the membrane. It localises to the coated pit. It is found in the golgi outpost. The protein resides in the cytoplasm. The protein localises to the cytoskeleton. Its subcellular location is the microtubule organizing center. It localises to the nucleus. In terms of biological role, endocytic receptor involved in endocytosis and in phagocytosis of apoptotic cells. Required for early embryonic development. Involved in cellular lipid homeostasis. Involved in the plasma clearance of chylomicron remnants and activated LRPAP1 (alpha 2-macroglobulin), as well as the local metabolism of complexes between plasminogen activators and their endogenous inhibitors. Acts as an LRPAP1 alpha-2-macroglobulin receptor. Acts as a TAU/MAPT receptor and controls the endocytosis of TAU/MAPT as well as its subsequent spread. May modulate cellular events, such as APP metabolism, kinase-dependent intracellular signaling, neuronal calcium signaling as well as neurotransmission. Also acts as a receptor for IGFBP3 to mediate cell growth inhibition. The polypeptide is Prolow-density lipoprotein receptor-related protein 1 (Rattus norvegicus (Rat)).